A 349-amino-acid chain; its full sequence is S-adenosylmethionine decarboxylase proenzyme 3 (349 aa).

Residues E9 and E12 contribute to the active site. E68 provides a ligand contact to substrate. S69 (schiff-base intermediate with substrate; via pyruvic acid) is an active-site residue. At S69 the chain carries Pyruvic acid (Ser); by autocatalysis. C83 functions as the Proton donor; for catalytic activity in the catalytic mechanism. Catalysis depends on proton acceptor; for processing activity residues S235 and H248. E252 lines the substrate pocket.

This sequence belongs to the eukaryotic AdoMetDC family. Pyruvate serves as cofactor. Post-translationally, is synthesized initially as an inactive proenzyme. Formation of the active enzyme involves a self-maturation process in which the active site pyruvoyl group is generated from an internal serine residue via an autocatalytic post-translational modification. Two non-identical subunits are generated from the proenzyme in this reaction, and the pyruvate is formed at the N-terminus of the alpha chain, which is derived from the carboxyl end of the proenzyme. The post-translation cleavage follows an unusual pathway, termed non-hydrolytic serinolysis, in which the side chain hydroxyl group of the serine supplies its oxygen atom to form the C-terminus of the beta chain, while the remainder of the serine residue undergoes an oxidative deamination to produce ammonia and the pyruvoyl group blocking the N-terminus of the alpha chain.

It carries out the reaction S-adenosyl-L-methionine + H(+) = S-adenosyl 3-(methylsulfanyl)propylamine + CO2. The protein operates within amine and polyamine biosynthesis; S-adenosylmethioninamine biosynthesis; S-adenosylmethioninamine from S-adenosyl-L-methionine: step 1/1. Functionally, essential for biosynthesis of the polyamines spermidine and spermine. Essential for polyamine homeostasis, and normal plant embryogenesis, growth and development. In Arabidopsis thaliana (Mouse-ear cress), this protein is S-adenosylmethionine decarboxylase proenzyme 3.